A 602-amino-acid chain; its full sequence is Probable HECT-type ubiquitin ligase-interacting protein creD (602 aa).

Disordered stretches follow at residues E375–S398 and T457–P499. The segment covering P463–P475 has biased composition (low complexity). A compositionally biased stretch (basic and acidic residues) spans L477–I492.

This sequence belongs to the arrestin family. As to quaternary structure, interacts with hulA.

Its function is as follows. Component of the regulatory network controlling carbon source utilization through ubiquitination and deubiquitination involving creA, creB, creC, creD and acrB. May be involved in signaling by recognizing appropriately phosphorylated substrates via its arrestin domains and then recruit a HECT-type ubiquitin ligase such as hulA, leading to ubiquitination of the substrate, providing a link between ubiquitination and phosphorylation in protein regulation and stability. The chain is Probable HECT-type ubiquitin ligase-interacting protein creD (creD) from Aspergillus clavatus (strain ATCC 1007 / CBS 513.65 / DSM 816 / NCTC 3887 / NRRL 1 / QM 1276 / 107).